A 419-amino-acid polypeptide reads, in one-letter code: DNA ligase (419 aa).

Residues 1 to 120 form an NTD region; it reads MLNQFPGQYS…ARQKRGAHTN (120 aa). An AD domain region spans residues 121–317; the sequence is RGMIPPMLVK…NYHSAHLAKL (197 aa). ATP contacts are provided by Q149, K151, E203, and F232. The N6-AMP-lysine intermediate role is filled by K151. A divalent metal cation is bound at residue E203. Residue E291 coordinates a divalent metal cation. The ATP site is built by I294 and K316. An OB domain region spans residues 318-419; the sequence is KPLLDAEFIL…REPINVLEII (102 aa).

The protein belongs to the ATP-dependent DNA ligase family. A divalent metal cation is required as a cofactor.

The protein localises to the virion. The catalysed reaction is ATP + (deoxyribonucleotide)n-3'-hydroxyl + 5'-phospho-(deoxyribonucleotide)m = (deoxyribonucleotide)n+m + AMP + diphosphate.. Very low-fidelity DNA ligase that seals nicks in double-stranded DNA during DNA repair. Together with the viral repair DNA polymerase X, fills the single nucleotide gaps generated by the AP endonuclease. It is not essential for viral replication and recombination. Displays a very low adenylation activity towards DNA with 3'-dideoxy- or 3'-amino-terminated nicks compared to regular nick DNA. The chain is DNA ligase (LIG) from Ornithodoros (relapsing fever ticks).